Consider the following 286-residue polypeptide: Digeranylgeranylglyceryl phosphate synthase (286 aa).

8 helical membrane passes run 21–41 (AVAA…FAVT), 42–62 (TAHV…GNAI), 96–116 (FLFV…IVLA), 133–155 (LPGV…GAAA), 162–181 (FGVV…REII), 214–234 (VLLV…FGIW), 235–255 (YLTL…QAPD), and 266–286 (RGMF…VAGI).

This sequence belongs to the UbiA prenyltransferase family. DGGGP synthase subfamily. Mg(2+) is required as a cofactor.

The protein resides in the cell membrane. It catalyses the reaction sn-3-O-(geranylgeranyl)glycerol 1-phosphate + (2E,6E,10E)-geranylgeranyl diphosphate = 2,3-bis-O-(geranylgeranyl)-sn-glycerol 1-phosphate + diphosphate. It functions in the pathway membrane lipid metabolism; glycerophospholipid metabolism. Prenyltransferase that catalyzes the transfer of the geranylgeranyl moiety of geranylgeranyl diphosphate (GGPP) to the C2 hydroxyl of (S)-3-O-geranylgeranylglyceryl phosphate (GGGP). This reaction is the second ether-bond-formation step in the biosynthesis of archaeal membrane lipids. In Haloquadratum walsbyi (strain DSM 16790 / HBSQ001), this protein is Digeranylgeranylglyceryl phosphate synthase.